A 72-amino-acid polypeptide reads, in one-letter code: Metallothionein-like protein 1 (72 aa).

It belongs to the metallothionein superfamily. Type 15 family.

Metallothioneins have a high content of cysteine residues that bind various heavy metals. This chain is Metallothionein-like protein 1, found in Erythranthe guttata (Yellow monkey flower).